A 217-amino-acid chain; its full sequence is Uracil-DNA glycosylase (217 aa).

The Proton acceptor role is filled by Asp-62.

The protein belongs to the uracil-DNA glycosylase (UDG) superfamily. UNG family.

The protein localises to the cytoplasm. It catalyses the reaction Hydrolyzes single-stranded DNA or mismatched double-stranded DNA and polynucleotides, releasing free uracil.. In terms of biological role, excises uracil residues from the DNA which can arise as a result of misincorporation of dUMP residues by DNA polymerase or due to deamination of cytosine. The chain is Uracil-DNA glycosylase from Streptococcus pneumoniae (strain P1031).